Reading from the N-terminus, the 692-residue chain is 5-taurinomethyluridine-[tRNA] synthase subunit MTO1, mitochondrial (692 aa).

A mitochondrion-targeting transit peptide spans 1–25 (MFYFRGCGRWVAASFTKLQFPLARL). FAD contacts are provided by residues 43–48 (GGGHAG), V155, S218, and Q407. At K508 the chain carries N6-methyllysine.

The protein belongs to the MnmG family. As to quaternary structure, homodimer; forms a dimer in the presence of potassium. Interacts with GTPBP3; forms the GTPBP3-MTO1 complex composed of homodimers of GTPBP3 and MTO1. FAD is required as a cofactor.

The protein resides in the mitochondrion. It carries out the reaction 5,10-methylenetetrahydrofolate + uridine(34) in tRNA + taurine + GTP + A + H2O = 5-taurinomethyluridine(34) in tRNA + 7,8-dihydrofolate + GDP + AH2 + phosphate + H(+). Component of the GTPBP3-MTO1 complex that catalyzes the 5-taurinomethyluridine (taum(5)U) modification at the 34th wobble position (U34) of mitochondrial tRNAs (mt-tRNAs), which plays a role in mt-tRNA decoding and mitochondrial translation. Taum(5)U formation on mammalian mt-tRNA requires the presence of both GTPBP3-mediated GTPase activity and MTO1 catalytic activity. In Pongo abelii (Sumatran orangutan), this protein is 5-taurinomethyluridine-[tRNA] synthase subunit MTO1, mitochondrial (MTO1).